The chain runs to 374 residues: Calcium/calmodulin-dependent protein kinase type 1 (374 aa).

In terms of domain architecture, Protein kinase spans 20-276 (YDFRDVLGTG…CEQALQHPWI (257 aa)). Residues 26-34 (LGTGAFSEV) and lysine 49 each bind ATP. A Glycyl lysine isopeptide (Lys-Gly) (interchain with G-Cter in ubiquitin) cross-link involves residue lysine 59. Aspartate 141 functions as the Proton acceptor in the catalytic mechanism. Threonine 177 carries the phosphothreonine; by CaMKK1 and CaMKK2 modification. The segment at 276-316 (IAGDTALDKNIHQSVSEQIKKNFAKSKWKQAFNATAVVRHM) is autoinhibitory domain. The segment at 296 to 317 (KNFAKSKWKQAFNATAVVRHMR) is calmodulin-binding. Residues 315-321 (HMRKLQL) carry the Nuclear export signal motif.

The protein belongs to the protein kinase superfamily. CAMK Ser/Thr protein kinase family. CaMK subfamily. In terms of assembly, monomer. Interacts with XPO1. Post-translationally, phosphorylated by CaMKK1 and CaMKK2 on Thr-177. In terms of processing, polybiquitinated by the E3 ubiquitin-protein ligase complex SCF(FBXL12), leading to proteasomal degradation. As to expression, ubiquitous.

Its subcellular location is the cytoplasm. It localises to the nucleus. It catalyses the reaction L-seryl-[protein] + ATP = O-phospho-L-seryl-[protein] + ADP + H(+). It carries out the reaction L-threonyl-[protein] + ATP = O-phospho-L-threonyl-[protein] + ADP + H(+). Activated by Ca(2+)/calmodulin. Binding of calmodulin results in conformational change that relieves intrasteric autoinhibition and allows phosphorylation of Thr-177 within the activation loop by CaMKK1 or CaMKK2. Phosphorylation of Thr-177 results in several fold increase in total activity. Unlike CaMK4, is unable to exhibit autonomous activity after Ca(2+)/calmodulin activation. Its function is as follows. Calcium/calmodulin-dependent protein kinase that operates in the calcium-triggered CaMKK-CaMK1 signaling cascade and, upon calcium influx, regulates transcription activators activity, cell cycle, hormone production, cell differentiation, actin filament organization and neurite outgrowth. Recognizes the substrate consensus sequence [MVLIF]-x-R-x(2)-[ST]-x(3)-[MVLIF]. Regulates axonal extension and growth cone motility in hippocampal and cerebellar nerve cells. Upon NMDA receptor-mediated Ca(2+) elevation, promotes dendritic growth in hippocampal neurons and is essential in synapses for full long-term potentiation (LTP) and ERK2-dependent translational activation. Downstream of NMDA receptors, promotes the formation of spines and synapses in hippocampal neurons by phosphorylating ARHGEF7/BETAPIX on 'Ser-673', which results in the enhancement of ARHGEF7 activity and activation of RAC1. Promotes neuronal differentiation and neurite outgrowth by activation and phosphorylation of MARK2 on 'Ser-91', 'Ser-92', 'Ser-93' and 'Ser-294'. Promotes nuclear export of HDAC5 and binding to 14-3-3 by phosphorylation of 'Ser-259' and 'Ser-498' in the regulation of muscle cell differentiation. Regulates NUMB-mediated endocytosis by phosphorylation of NUMB on 'Ser-276' and 'Ser-295'. Involved in the regulation of basal and estrogen-stimulated migration of medulloblastoma cells through ARHGEF7/BETAPIX phosphorylation. Is required for proper activation of cyclin-D1/CDK4 complex during G1 progression in diploid fibroblasts. Plays a role in K(+) and ANG2-mediated regulation of the aldosterone synthase (CYP11B2) to produce aldosterone in the adrenal cortex. Phosphorylates EIF4G3/eIF4GII. In vitro phosphorylates CREB1, ATF1, CFTR, MYL9 and SYN1/synapsin I. The protein is Calcium/calmodulin-dependent protein kinase type 1 (Camk1) of Mus musculus (Mouse).